The sequence spans 169 residues: Secretory-abundant heat soluble protein 1 (169 aa).

The signal sequence occupies residues 1–19 (MSRAAVAIALLGCVVAAYG). Positions 31-60 (EWTGKSWMGKWESTDRIENFDAFISALGLP) are SAHS-c1. The segment at 75–103 (WKEGDHYHHQISVPDKNYKNDVNFKLNEE) is SAHS-c2. Asparagine 109 is a glycosylation site (N-linked (GlcNAc...) asparagine). Residues 116-165 (KYTEDGGNLKAEVHVPSRNKVIHDEYKVNGDELEKTYKVGDVTAKRWYKK) form an SAHS-c3 region.

The protein belongs to the Secretory-abundant heat soluble protein (SAHS) family.

The protein resides in the secreted. In terms of biological role, secreted heat soluble protein acting as a molecular shield in water-deficient condition. Tardigrade-specific intrinsically disordered proteins (TDPs) are essential for desiccation tolerance by forming non-crystalline amorphous solids upon desiccation, and this vitrified state mirrors their protective capabilities. The sequence is that of Secretory-abundant heat soluble protein 1 from Ramazzottius varieornatus (Water bear).